The following is a 23-amino-acid chain: Septenin 2b (23 aa).

In terms of tissue distribution, expressed in skin glands.

It localises to the secreted. May act as an antimicrobial peptide. In Osteopilus septentrionalis (Cuban treefrog), this protein is Septenin 2b.